The sequence spans 167 residues: C-X-C motif chemokine 15 (167 aa).

The signal sequence occupies residues Met-1–Thr-25. Cystine bridges form between Cys-30/Cys-57 and Cys-32/Cys-73. Ser-157 carries the phosphoserine modification.

It belongs to the intercrine alpha (chemokine CxC) family. As to expression, expression restricted to the lung, produced by bronchoepithelial cells and is released into the airways. Expressed at low levels in fetal lung.

The protein localises to the secreted. Functionally, chemotactic for neutrophils. Involved in lung-specific neutrophil trafficking during normal and inflammatory conditions. The sequence is that of C-X-C motif chemokine 15 (Cxcl15) from Mus musculus (Mouse).